A 521-amino-acid polypeptide reads, in one-letter code: Putative FNIP repeat-containing protein L162 (521 aa).

FNIP repeat units follow at residues 179–221 (FNKS…LGYK) and 222–263 (YNYP…MGGR).

This chain is Putative FNIP repeat-containing protein L162, found in Acanthamoeba polyphaga mimivirus (APMV).